Reading from the N-terminus, the 316-residue chain is L-lactate dehydrogenase 3 (316 aa).

NAD(+)-binding residues include Val16, Asp37, Arg42, and Tyr68. Substrate is bound at residue Arg91. NAD(+) is bound by residues Ser104, 121-123 (ASN), and Thr146. Substrate is bound at residue 123-126 (NPVD). 151–154 (DSSR) serves as a coordination point for substrate. Residues Arg156 and His171 each coordinate beta-D-fructose 1,6-bisphosphate. His178 (proton acceptor) is an active-site residue. Thr233 lines the substrate pocket.

Belongs to the LDH/MDH superfamily. LDH family. As to quaternary structure, homotetramer.

The protein localises to the cytoplasm. The enzyme catalyses (S)-lactate + NAD(+) = pyruvate + NADH + H(+). It participates in fermentation; pyruvate fermentation to lactate; (S)-lactate from pyruvate: step 1/1. Its activity is regulated as follows. Allosterically activated by fructose 1,6-bisphosphate (FBP). Its function is as follows. Catalyzes the conversion of lactate to pyruvate. The chain is L-lactate dehydrogenase 3 from Bacillus thuringiensis subsp. konkukian (strain 97-27).